The chain runs to 237 residues: Myelin protein zero-like protein 3 (237 aa).

The first 32 residues, 1 to 32 (MQLARGTVGGRGCALFPLLSILVVQGARIVLS), serve as a signal peptide directing secretion. Residues 33-149 (LEISADAHVR…NIPLTELTVT (117 aa)) enclose the Ig-like V-type domain. Residues 33 to 159 (LEISADAHVR…ERGFGTMLSS (127 aa)) lie on the Extracellular side of the membrane. C53 and C129 are oxidised to a cystine. N-linked (GlcNAc...) asparagine glycosylation is present at N124. The chain crosses the membrane as a helical span at residues 160 to 180 (VALLSILVFVPSAVVVILLLV). The Cytoplasmic segment spans residues 181 to 237 (RMGRKATGVQKRSRSGYKKSSIEVSDDTDQEDSNDCMTRLCVRCAECLDSDYEEEAY).

Belongs to the myelin P0 protein family. In terms of tissue distribution, present in all tissues tested, including the skin. Present in the keratinocytes and sebocytes in the skin (at protein level).

The protein resides in the membrane. Functionally, mediates homophilic cell-cell adhesion. The sequence is that of Myelin protein zero-like protein 3 (Mpzl3) from Mus musculus (Mouse).